Here is a 589-residue protein sequence, read N- to C-terminus: Putative sphingomyelin phosphodiesterase asm-3 (589 aa).

The signal sequence occupies residues 1–17 (MLLGLLVLSLAFQGTLA). The Saposin B-type domain maps to 18–101 (VTECEECKSI…LMKNDCGDFV (84 aa)). 3 disulfides stabilise this stretch: Cys21–Cys97, Cys24–Cys89, and Cys52–Cys63. An N-linked (GlcNAc...) asparagine glycan is attached at Asn109. 2 residues coordinate Zn(2+): Asp139 and His141. 2 disulfides stabilise this stretch: Cys154-Cys159 and Cys160-Cys188. Residue Asp217 coordinates Zn(2+). Asn237 is a glycosylation site (N-linked (GlcNAc...) asparagine). Position 257 (Asn257) interacts with Zn(2+). N-linked (GlcNAc...) asparagine glycosylation occurs at Asn334. Residues His364, His398, and His400 each coordinate Zn(2+). N-linked (GlcNAc...) asparagine glycosylation is present at Asn463. Cystine bridges form between Cys530/Cys535 and Cys541/Cys553. Residues 562–589 (KPEPKKNKYSARFATSNERRRGKEECKI) are disordered. Positions 578 to 589 (NERRRGKEECKI) are enriched in basic and acidic residues.

This sequence belongs to the acid sphingomyelinase family. Zn(2+) serves as cofactor.

It is found in the secreted. It carries out the reaction an N-(acyl)-sphingosylphosphocholine + H2O = an N-acyl-sphingoid base + phosphocholine + H(+). It catalyses the reaction a sphingomyelin + H2O = phosphocholine + an N-acylsphing-4-enine + H(+). The enzyme catalyses an N-acyl-15-methylhexadecasphing-4-enine-1-phosphocholine + H2O = an N-acyl-15-methylhexadecasphing-4-enine + phosphocholine + H(+). The protein operates within lipid metabolism; sphingolipid metabolism. Converts sphingomyelin to ceramide (N-acyl-sphingoid base) and phosphocholine. C.elegans contain specific sphingoid bases, which are unique or different in structure compared to the sphingoid bases found in other animals. Two examples of these distinctive compounds are: 15-methylhexadecasphinganine and 15-methylhexadecasphing-4-enine. This chain is Putative sphingomyelin phosphodiesterase asm-3 (asm-3), found in Caenorhabditis elegans.